The chain runs to 255 residues: Acetylglutamate kinase (255 aa).

Residues 40–41 (GG), Arg62, and Asn153 each bind substrate.

This sequence belongs to the acetylglutamate kinase family. ArgB subfamily.

The protein resides in the cytoplasm. It carries out the reaction N-acetyl-L-glutamate + ATP = N-acetyl-L-glutamyl 5-phosphate + ADP. Its pathway is amino-acid biosynthesis; L-arginine biosynthesis; N(2)-acetyl-L-ornithine from L-glutamate: step 2/4. Functionally, catalyzes the ATP-dependent phosphorylation of N-acetyl-L-glutamate. The chain is Acetylglutamate kinase from Bacillus mycoides (strain KBAB4) (Bacillus weihenstephanensis).